A 760-amino-acid chain; its full sequence is Phosphoribosylformylglycinamidine synthase subunit PurL (760 aa).

The tract at residues 1–25 (MNMSLPADRDTAKKPSAQKPSAHAQ) is disordered. Residue His-69 is part of the active site. Positions 72 and 115 each coordinate ATP. A Mg(2+)-binding site is contributed by Glu-117. Substrate contacts are provided by residues 118–121 (SHNH) and Arg-140. Catalysis depends on His-119, which acts as the Proton acceptor. Mg(2+) is bound at residue Asp-141. Position 265 (Gln-265) interacts with substrate. Residue Asp-293 coordinates Mg(2+). 337 to 339 (ESQ) is a substrate binding site. Asn-519 and Gly-556 together coordinate ATP. Asn-557 is a Mg(2+) binding site. Ser-559 serves as a coordination point for substrate.

The protein belongs to the FGAMS family. Monomer. Part of the FGAM synthase complex composed of 1 PurL, 1 PurQ and 2 PurS subunits.

The protein resides in the cytoplasm. It carries out the reaction N(2)-formyl-N(1)-(5-phospho-beta-D-ribosyl)glycinamide + L-glutamine + ATP + H2O = 2-formamido-N(1)-(5-O-phospho-beta-D-ribosyl)acetamidine + L-glutamate + ADP + phosphate + H(+). It participates in purine metabolism; IMP biosynthesis via de novo pathway; 5-amino-1-(5-phospho-D-ribosyl)imidazole from N(2)-formyl-N(1)-(5-phospho-D-ribosyl)glycinamide: step 1/2. Its function is as follows. Part of the phosphoribosylformylglycinamidine synthase complex involved in the purines biosynthetic pathway. Catalyzes the ATP-dependent conversion of formylglycinamide ribonucleotide (FGAR) and glutamine to yield formylglycinamidine ribonucleotide (FGAM) and glutamate. The FGAM synthase complex is composed of three subunits. PurQ produces an ammonia molecule by converting glutamine to glutamate. PurL transfers the ammonia molecule to FGAR to form FGAM in an ATP-dependent manner. PurS interacts with PurQ and PurL and is thought to assist in the transfer of the ammonia molecule from PurQ to PurL. This Tropheryma whipplei (strain TW08/27) (Whipple's bacillus) protein is Phosphoribosylformylglycinamidine synthase subunit PurL.